We begin with the raw amino-acid sequence, 435 residues long: D-amino acid dehydrogenase (435 aa).

Residue 3–17 (VIVLGGGVLGVSTAW) coordinates FAD.

It belongs to the DadA oxidoreductase family. FAD is required as a cofactor.

The catalysed reaction is a D-alpha-amino acid + A + H2O = a 2-oxocarboxylate + AH2 + NH4(+). It functions in the pathway amino-acid degradation; D-alanine degradation; NH(3) and pyruvate from D-alanine: step 1/1. Its function is as follows. Oxidative deamination of D-amino acids. The sequence is that of D-amino acid dehydrogenase from Chromobacterium violaceum (strain ATCC 12472 / DSM 30191 / JCM 1249 / CCUG 213 / NBRC 12614 / NCIMB 9131 / NCTC 9757 / MK).